We begin with the raw amino-acid sequence, 57 residues long: U13-myrmicitoxin-Mri1a (57 aa).

Residues 1–23 (MKIIHVLLLVAVVAITMSPSIMA) form the signal peptide. Residues 24 to 29 (ESVAEA) constitute a propeptide that is removed on maturation. The residue at position 56 (E56) is a Glutamic acid 1-amide.

As to expression, expressed by the venom gland.

The protein resides in the secreted. In terms of biological role, induces paralysis 1 hour after injection into insects (blowfly L.caesar) but does not appear to be lethal. The sequence is that of U13-myrmicitoxin-Mri1a from Manica rubida (European giant red ant).